A 198-amino-acid polypeptide reads, in one-letter code: Integrator complex subunit 8-like protein (198 aa).

The protein belongs to the Integrator subunit 8 family. In terms of assembly, component of the Integrator complex. The core complex associates with protein phosphatase 2A subunits, to form the Integrator-PP2A (INTAC) complex.

The protein resides in the nucleus. The protein localises to the chromosome. Functionally, component of the integrator complex, a multiprotein complex that terminates RNA polymerase II (Pol II) transcription in the promoter-proximal region of genes. The integrator complex provides a quality checkpoint during transcription elongation by driving premature transcription termination of transcripts that are unfavorably configured for transcriptional elongation: the complex terminates transcription by (1) catalyzing dephosphorylation of the C-terminal domain (CTD) of Pol II subunit polr2a, (2) degrading the exiting nascent RNA transcript via endonuclease activity and (3) promoting the release of Pol II from bound DNA. The integrator complex is also involved in terminating the synthesis of non-coding Pol II transcripts, such as enhancer RNAs (eRNAs), small nuclear RNAs (snRNAs), telomerase RNAs and long non-coding RNAs (lncRNAs). Within the integrator complex, INTS8 is required for the recruitment of protein phosphatase 2A (PP2A) to transcription pause-release checkpoint. The chain is Integrator complex subunit 8-like protein from Dictyostelium discoideum (Social amoeba).